A 153-amino-acid polypeptide reads, in one-letter code: MTPTLETKYVFTITARIGDVTSAGEIGTGVRRIIPILGGEVKGEGISGQVLPFGADFQIIRPNELIELEAKYAFETDDGAVVYVENVGIRFGPVELLRKLKRGEPVDPKVIYFRTRPRFETGHPNYQWLMQYLFVGSAARHADRVVIDVHQVL.

This sequence belongs to the UPF0311 family.

The polypeptide is UPF0311 protein RPA1785 (Rhodopseudomonas palustris (strain ATCC BAA-98 / CGA009)).